Reading from the N-terminus, the 155-residue chain is UPF0735 ACT domain-containing protein CA_C1234 (155 aa).

Residues 79–154 (TISILIEHRR…NVLKVEIVAM (76 aa)) form the ACT domain.

Belongs to the UPF0735 family.

In Clostridium acetobutylicum (strain ATCC 824 / DSM 792 / JCM 1419 / IAM 19013 / LMG 5710 / NBRC 13948 / NRRL B-527 / VKM B-1787 / 2291 / W), this protein is UPF0735 ACT domain-containing protein CA_C1234.